The following is a 453-amino-acid chain: Ras association domain-containing protein 10 (453 aa).

Positions 1–107 (MENEEWKVSV…VKFVLVRSEA (107 aa)) constitute a Ras-associating domain. Residues 262-295 (QKCDEVLLLQEQISRQEEAMEQMTVQIQEELNKR) adopt a coiled-coil conformation. Residues 299–310 (RRQEELSSKEQE) are compositionally biased toward basic and acidic residues. 2 disordered regions span residues 299-322 (RRQEELSSKEQESSLSDSGADQGG) and 402-453 (GVTT…ESLV). Polar residues-rich tracts occupy residues 402 to 411 (GVTTTGSPTD) and 433 to 444 (TGLSSMHSQDSD).

It is found in the cytoplasm. The protein resides in the cytosol. It localises to the cytoskeleton. The protein localises to the microtubule organizing center. Its subcellular location is the centrosome. It is found in the spindle pole. Its function is as follows. May play role in regulating embryonic neurogenesis. The chain is Ras association domain-containing protein 10 (rassf10) from Xenopus laevis (African clawed frog).